A 76-amino-acid chain; its full sequence is Sec-independent protein translocase protein TatA (76 aa).

A helical transmembrane segment spans residues 1–21 (MGSFSIWHWLIVLAVVLLLFG). Positions 43 to 76 (MSDEDAKDDARDSGRTIDAKADETVNDVKKTTKS) are disordered. Positions 50 to 76 (DDARDSGRTIDAKADETVNDVKKTTKS) are enriched in basic and acidic residues.

It belongs to the TatA/E family. In terms of assembly, the Tat system comprises two distinct complexes: a TatABC complex, containing multiple copies of TatA, TatB and TatC subunits, and a separate TatA complex, containing only TatA subunits. Substrates initially bind to the TatABC complex, which probably triggers association of the separate TatA complex to form the active translocon.

The protein resides in the cell inner membrane. Its function is as follows. Part of the twin-arginine translocation (Tat) system that transports large folded proteins containing a characteristic twin-arginine motif in their signal peptide across membranes. TatA could form the protein-conducting channel of the Tat system. The sequence is that of Sec-independent protein translocase protein TatA from Brucella anthropi (strain ATCC 49188 / DSM 6882 / CCUG 24695 / JCM 21032 / LMG 3331 / NBRC 15819 / NCTC 12168 / Alc 37) (Ochrobactrum anthropi).